The primary structure comprises 269 residues: GTP cyclohydrolase FolE2 (269 aa).

It belongs to the GTP cyclohydrolase IV family.

It carries out the reaction GTP + H2O = 7,8-dihydroneopterin 3'-triphosphate + formate + H(+). Its pathway is cofactor biosynthesis; 7,8-dihydroneopterin triphosphate biosynthesis; 7,8-dihydroneopterin triphosphate from GTP: step 1/1. In terms of biological role, converts GTP to 7,8-dihydroneopterin triphosphate. This chain is GTP cyclohydrolase FolE2, found in Burkholderia thailandensis (strain ATCC 700388 / DSM 13276 / CCUG 48851 / CIP 106301 / E264).